Here is a 298-residue protein sequence, read N- to C-terminus: Apolipoprotein E (298 aa).

Positions methionine 1–alanine 18 are cleaved as a signal peptide. Repeat copies occupy residues leucine 74–leucine 94, glycine 95–leucine 116, glycine 117–leucine 138, glycine 139–leucine 160, glutamine 161–alanine 182, glutamate 183–glutamine 203, alanine 204–methionine 221, and arginine 222–methionine 243. The 8 X 22 AA approximate tandem repeats stretch occupies residues glycine 95–methionine 243. A Methionine sulfoxide modification is found at methionine 137. Serine 141 is subject to Phosphoserine. The interval serine 151–glutamine 161 is LDL and other lipoprotein receptors binding. Lysine 155–lysine 158 is a heparin binding site. Positions glutamine 203–aspartate 271 are lipid-binding and lipoprotein association. Heparin is bound at residue tryptophan 217–arginine 224. The specificity for association with VLDL stretch occupies residues alanine 259–aspartate 271.

This sequence belongs to the apolipoprotein A1/A4/E family. As to quaternary structure, homotetramer. May interact with ABCA1; functionally associated with ABCA1 in the biogenesis of HDLs. May interact with APP/A4 amyloid-beta peptide; the interaction is extremely stable in vitro but its physiological significance is unclear. May interact with MAPT. May interact with MAP2. In the cerebrospinal fluid, interacts with secreted SORL1. Interacts with PMEL; this allows the loading of PMEL luminal fragment on ILVs to induce fibril nucleation. Post-translationally, APOE exists as multiple glycosylated and sialylated glycoforms within cells and in plasma. The extent of glycosylation and sialylation are tissue and context specific. Glycated in plasma VLDL. In terms of processing, phosphorylated by FAM20C in the extracellular medium.

Its subcellular location is the secreted. The protein resides in the extracellular space. It localises to the extracellular matrix. The protein localises to the extracellular vesicle. It is found in the endosome. Its subcellular location is the multivesicular body. APOE is an apolipoprotein, a protein associating with lipid particles, that mainly functions in lipoprotein-mediated lipid transport between organs via the plasma and interstitial fluids. APOE is a core component of plasma lipoproteins and is involved in their production, conversion and clearance. Apolipoproteins are amphipathic molecules that interact both with lipids of the lipoprotein particle core and the aqueous environment of the plasma. As such, APOE associates with chylomicrons, chylomicron remnants, very low density lipoproteins (VLDL) and intermediate density lipoproteins (IDL) but shows a preferential binding to high-density lipoproteins (HDL). It also binds a wide range of cellular receptors including the LDL receptor/LDLR, the LDL receptor-related proteins LRP1, LRP2 and LRP8 and the very low-density lipoprotein receptor/VLDLR that mediate the cellular uptake of the APOE-containing lipoprotein particles. Finally, APOE also has a heparin-binding activity and binds heparan-sulfate proteoglycans on the surface of cells, a property that supports the capture and the receptor-mediated uptake of APOE-containing lipoproteins by cells. A main function of APOE is to mediate lipoprotein clearance through the uptake of chylomicrons, VLDLs, and HDLs by hepatocytes. APOE is also involved in the biosynthesis by the liver of VLDLs as well as their uptake by peripheral tissues ensuring the delivery of triglycerides and energy storage in muscle, heart and adipose tissues. By participating in the lipoprotein-mediated distribution of lipids among tissues, APOE plays a critical role in plasma and tissues lipid homeostasis. APOE is also involved in two steps of reverse cholesterol transport, the HDLs-mediated transport of cholesterol from peripheral tissues to the liver, and thereby plays an important role in cholesterol homeostasis. First, it is functionally associated with ABCA1 in the biogenesis of HDLs in tissues. Second, it is enriched in circulating HDLs and mediates their uptake by hepatocytes. APOE also plays an important role in lipid transport in the central nervous system, regulating neuron survival and sprouting. This Cavia tschudii (Montane guinea pig) protein is Apolipoprotein E (APOE).